We begin with the raw amino-acid sequence, 271 residues long: Formamidopyrimidine-DNA glycosylase (271 aa).

Pro2 serves as the catalytic Schiff-base intermediate with DNA. Glu3 (proton donor) is an active-site residue. Lys57 functions as the Proton donor; for beta-elimination activity in the catalytic mechanism. DNA contacts are provided by His90, Arg109, and Lys151. An FPG-type zinc finger spans residues 236 to 270 (HVYGRGSKSCTHCGNLLSEIRLGQRTTVFCGLCQT). Arg260 (proton donor; for delta-elimination activity) is an active-site residue.

This sequence belongs to the FPG family. Monomer. Zn(2+) serves as cofactor.

It catalyses the reaction Hydrolysis of DNA containing ring-opened 7-methylguanine residues, releasing 2,6-diamino-4-hydroxy-5-(N-methyl)formamidopyrimidine.. The enzyme catalyses 2'-deoxyribonucleotide-(2'-deoxyribose 5'-phosphate)-2'-deoxyribonucleotide-DNA = a 3'-end 2'-deoxyribonucleotide-(2,3-dehydro-2,3-deoxyribose 5'-phosphate)-DNA + a 5'-end 5'-phospho-2'-deoxyribonucleoside-DNA + H(+). Functionally, involved in base excision repair of DNA damaged by oxidation or by mutagenic agents. Acts as a DNA glycosylase that recognizes and removes damaged bases. Has a preference for oxidized purines, such as 7,8-dihydro-8-oxoguanine (8-oxoG). Has AP (apurinic/apyrimidinic) lyase activity and introduces nicks in the DNA strand. Cleaves the DNA backbone by beta-delta elimination to generate a single-strand break at the site of the removed base with both 3'- and 5'-phosphates. In Shewanella denitrificans (strain OS217 / ATCC BAA-1090 / DSM 15013), this protein is Formamidopyrimidine-DNA glycosylase.